The following is a 443-amino-acid chain: FAD-dependent monooxygenase orf3 (443 aa).

A helical membrane pass occupies residues 5-25 (SIEVAIIGAGITGITLALGLL). FAD is bound by residues glutamate 35 and glycine 48. 2 N-linked (GlcNAc...) asparagine glycosylation sites follow: asparagine 75 and asparagine 87. Arginine 116 contributes to the FAD binding site. Residue arginine 199 is part of the active site. Residues aspartate 315 and alanine 328 each contribute to the FAD site.

The protein belongs to the paxM FAD-dependent monooxygenase family. Requires FAD as cofactor.

The protein localises to the membrane. It participates in secondary metabolite biosynthesis. In terms of biological role, FAD-dependent monooxygenase; part of the gene cluster that mediates the biosynthesis of nigerpyrone and its derivatives carbonarone A and pestalamide A. The biosynthesis pathway begins with the polyketide assembly by epaA to form phenylacetyl triketide precursor from successive condensation of two malonyl-CoA, presumably with one phenylacetyl-CoA starter unit produced by the phenylacetyl-CoA ligase epaB. For the nigerpyrone biosynthesis, the reactive polyketide chain is released as an aldehyde through the R-domain. A nonenzymatic cyclization and dehydration may create nigerpyrone. For the biosynthesis of carbonarone A and pestalamide A, an extra methyl group is added through the C-methyltransferase domain. Several further steps involving the dehydrogenase orf1, the cytochrome P450 monooxygenase orf2 and the FAD-dependent monooxygenase orf3 are required to form a carbonarone A precursor which is converted to carbonarone A via cyclization. The O-acetyltransferase epaC could catalyze the transfer of 2-methylsuccinyl-CoA, a common intermediate in the ethylmalonyl-CoA pathway, to generate the final product pestalamide A. In Aspergillus niger (strain ATCC MYA-4892 / CBS 513.88 / FGSC A1513), this protein is FAD-dependent monooxygenase orf3.